Here is a 341-residue protein sequence, read N- to C-terminus: Phosphoribosylformylglycinamidine cyclo-ligase (341 aa).

It belongs to the AIR synthase family.

The protein localises to the cytoplasm. It carries out the reaction 2-formamido-N(1)-(5-O-phospho-beta-D-ribosyl)acetamidine + ATP = 5-amino-1-(5-phospho-beta-D-ribosyl)imidazole + ADP + phosphate + H(+). It functions in the pathway purine metabolism; IMP biosynthesis via de novo pathway; 5-amino-1-(5-phospho-D-ribosyl)imidazole from N(2)-formyl-N(1)-(5-phospho-D-ribosyl)glycinamide: step 2/2. The sequence is that of Phosphoribosylformylglycinamidine cyclo-ligase from Xanthomonas campestris pv. campestris (strain 8004).